Consider the following 84-residue polypeptide: U2-theraphotoxin-Cg1b 2 (84 aa).

Positions 1-21 (MKVSVLITLAVLGVMFLLTSA) are cleaved as a signal peptide. Positions 22–48 (EERGSDQMDSPAWLKSMEIIFQSEERE) are excised as a propeptide. Disulfide bonds link Cys49–Cys63, Cys56–Cys68, and Cys62–Cys76.

This sequence belongs to the neurotoxin 10 (Hwtx-1) family. 06 (F4b) subfamily. In terms of tissue distribution, expressed by the venom gland.

The protein resides in the secreted. In terms of biological role, probable ion channel inhibitor. The chain is U2-theraphotoxin-Cg1b 2 from Chilobrachys guangxiensis (Chinese earth tiger tarantula).